The following is a 159-amino-acid chain: Cytochrome c nitrite reductase subunit NrfH (159 aa).

At 2–14 the chain is on the cytoplasmic side; that stretch reads SEEKSRNGPARLK. The helical; Signal-anchor for type II membrane protein transmembrane segment at 15 to 33 threads the bilayer; it reads LVLGGATLGVVALATVAFG. Topologically, residues 34-159 are periplasmic; it reads MKYTDQRPFC…PISTREVADE (126 aa). Residues Cys-43, Cys-46, Met-49, His-61, and Cys-66 each contribute to the heme site. A menaquinol is bound at residue Asn-67. The heme site is built by Cys-69 and His-70. A menaquinol contacts are provided by Lys-82 and Asp-89. Residue Asp-89 participates in heme binding. Positions 99–100 are interaction with NrfA; that stretch reads GD. The heme site is built by Cys-116, Cys-119, His-120, Cys-136, Cys-139, His-140, and His-145. An interaction with NrfA region spans residues 123–158; sequence TNVEVASMEAKKYCTDCHRNVQHMRMKPISTREVAD.

This sequence belongs to the NapC/NirT/NrfH family. Component of the NrfHA cytochrome c nitrite reductase complex composed of 4 NrfA catalytic subunits and 2 NrfH quinone-binding subunits. Interacts with NrfA homodimer. Heme serves as cofactor.

The protein resides in the cell inner membrane. In terms of biological role, electron donor subunit of the cytochrome c nitrite reductase holocomplex NrfHA. Acquires electrons from the menaquinone pool and mediates their transfer to the catalytic subunit NrfA in an anaerobic respiratory process of nitrite. The other biological function of the NrfHA holocomplex is to detoxify nitrite. This function is essential for the survival of this organism as it enables it to overcome inhibition by nitrite, which is produced by other organisms living in the same environment. The protein is Cytochrome c nitrite reductase subunit NrfH of Nitratidesulfovibrio vulgaris (strain ATCC 29579 / DSM 644 / CCUG 34227 / NCIMB 8303 / VKM B-1760 / Hildenborough) (Desulfovibrio vulgaris).